A 34-amino-acid chain; its full sequence is Photosystem II reaction center protein M (34 aa).

A helical transmembrane segment spans residues Ile-5–Ile-25.

It belongs to the PsbM family. PSII is composed of 1 copy each of membrane proteins PsbA, PsbB, PsbC, PsbD, PsbE, PsbF, PsbH, PsbI, PsbJ, PsbK, PsbL, PsbM, PsbT, PsbX, PsbY, PsbZ, Psb30/Ycf12, at least 3 peripheral proteins of the oxygen-evolving complex and a large number of cofactors. It forms dimeric complexes.

The protein localises to the plastid. The protein resides in the chloroplast thylakoid membrane. In terms of biological role, one of the components of the core complex of photosystem II (PSII). PSII is a light-driven water:plastoquinone oxidoreductase that uses light energy to abstract electrons from H(2)O, generating O(2) and a proton gradient subsequently used for ATP formation. It consists of a core antenna complex that captures photons, and an electron transfer chain that converts photonic excitation into a charge separation. This subunit is found at the monomer-monomer interface. The chain is Photosystem II reaction center protein M from Triticum aestivum (Wheat).